The following is a 188-amino-acid chain: Cytochrome b561 homolog 2 (188 aa).

Residues 1–15 (MSFTNTPERYGVISA) lie on the Cytoplasmic side of the membrane. The helical transmembrane segment at 16-36 (AFHWLSAIIVYGMFALGLWMV) threads the bilayer. Positions 18 and 52 each coordinate heme b. Residues 37–54 (TLSYYDGWYHKAPELHKS) are Periplasmic-facing. The helical transmembrane segment at 55–75 (IGILLMMGLVIRVLWRVISPP) threads the bilayer. Residues 76 to 91 (PGPLPSYSPMTRLAAR) are Cytoplasmic-facing. The chain crosses the membrane as a helical span at residues 92 to 112 (AGHLALYLLLFAIGISGYLIS). At 113–143 (TADGKPISVFGWFDVPATLADAGAQADFAGA) the chain is on the periplasmic side. Residues 144–164 (LHFWLAWSVVVLSVMHGFMAL) form a helical membrane-spanning segment. 2 residues coordinate heme b: His145 and His159. Over 165 to 188 (KHHFIDKDDTLKRMLGKSSSDYGV) the chain is Cytoplasmic.

Belongs to the cytochrome b561 family. Heme b serves as cofactor.

It is found in the cell inner membrane. The polypeptide is Cytochrome b561 homolog 2 (yceJ) (Escherichia coli (strain K12)).